The sequence spans 125 residues: Small ribosomal subunit protein bS6 (125 aa).

Belongs to the bacterial ribosomal protein bS6 family.

Binds together with bS18 to 16S ribosomal RNA. This chain is Small ribosomal subunit protein bS6 (rpsF), found in Campylobacter jejuni subsp. jejuni serotype O:2 (strain ATCC 700819 / NCTC 11168).